A 538-amino-acid polypeptide reads, in one-letter code: CTP synthase (538 aa).

The tract at residues 1–267 (MDRAKFIFVT…LTPIARRFNL (267 aa)) is amidoligase domain. Position 15 (serine 15) interacts with CTP. Serine 15 contacts UTP. Residues 16 to 21 (SLGKGI) and aspartate 73 contribute to the ATP site. Mg(2+) contacts are provided by aspartate 73 and glutamate 141. CTP contacts are provided by residues 148-150 (DME), 188-193 (KTKPTQ), and lysine 224. Residues 188–193 (KTKPTQ) and lysine 224 each bind UTP. A Glutamine amidotransferase type-1 domain is found at 292–538 (KIGFVGKYLS…DFIKSALSKS (247 aa)). Glycine 351 is an L-glutamine binding site. Cysteine 378 serves as the catalytic Nucleophile; for glutamine hydrolysis. L-glutamine contacts are provided by residues 379–382 (LGMQ), glutamate 402, and arginine 469. Catalysis depends on residues histidine 513 and glutamate 515.

This sequence belongs to the CTP synthase family. Homotetramer.

The catalysed reaction is UTP + L-glutamine + ATP + H2O = CTP + L-glutamate + ADP + phosphate + 2 H(+). It carries out the reaction L-glutamine + H2O = L-glutamate + NH4(+). The enzyme catalyses UTP + NH4(+) + ATP = CTP + ADP + phosphate + 2 H(+). It participates in pyrimidine metabolism; CTP biosynthesis via de novo pathway; CTP from UDP: step 2/2. Its activity is regulated as follows. Allosterically activated by GTP, when glutamine is the substrate; GTP has no effect on the reaction when ammonia is the substrate. The allosteric effector GTP functions by stabilizing the protein conformation that binds the tetrahedral intermediate(s) formed during glutamine hydrolysis. Inhibited by the product CTP, via allosteric rather than competitive inhibition. In terms of biological role, catalyzes the ATP-dependent amination of UTP to CTP with either L-glutamine or ammonia as the source of nitrogen. Regulates intracellular CTP levels through interactions with the four ribonucleotide triphosphates. This Helicobacter pylori (strain HPAG1) protein is CTP synthase.